Consider the following 262-residue polypeptide: Phosphatidylglycerol--prolipoprotein diacylglyceryl transferase (262 aa).

Transmembrane regions (helical) follow at residues 9–29, 41–61, 80–100, and 109–129; these read LGPLAIRWYALCIVTGLILAV, IIPDDILDFILVAFPLAILGA, IFAIWNGGLAIYGGLITGALV, and LINTWDFLDIAAPSVMIAQSL. Arg131 is an a 1,2-diacyl-sn-glycero-3-phospho-(1'-sn-glycerol) binding site. The next 3 helical transmembrane spans lie at 167 to 187, 197 to 217, and 226 to 246; these read QPTFLYESLWNLLGFALILIF, GHITAFYLIWYGFGRMVIEGM, and GLRVSQWLSVVFIGLGIMIVI.

Belongs to the Lgt family.

It localises to the cell membrane. The catalysed reaction is L-cysteinyl-[prolipoprotein] + a 1,2-diacyl-sn-glycero-3-phospho-(1'-sn-glycerol) = an S-1,2-diacyl-sn-glyceryl-L-cysteinyl-[prolipoprotein] + sn-glycerol 1-phosphate + H(+). Its pathway is protein modification; lipoprotein biosynthesis (diacylglyceryl transfer). In terms of biological role, catalyzes the transfer of the diacylglyceryl group from phosphatidylglycerol to the sulfhydryl group of the N-terminal cysteine of a prolipoprotein, the first step in the formation of mature lipoproteins. The sequence is that of Phosphatidylglycerol--prolipoprotein diacylglyceryl transferase from Streptococcus pneumoniae (strain Taiwan19F-14).